We begin with the raw amino-acid sequence, 397 residues long: Tryptophan synthase beta chain (397 aa).

At Lys87 the chain carries N6-(pyridoxal phosphate)lysine.

Belongs to the TrpB family. Tetramer of two alpha and two beta chains. Pyridoxal 5'-phosphate serves as cofactor.

The enzyme catalyses (1S,2R)-1-C-(indol-3-yl)glycerol 3-phosphate + L-serine = D-glyceraldehyde 3-phosphate + L-tryptophan + H2O. Its pathway is amino-acid biosynthesis; L-tryptophan biosynthesis; L-tryptophan from chorismate: step 5/5. The beta subunit is responsible for the synthesis of L-tryptophan from indole and L-serine. The polypeptide is Tryptophan synthase beta chain (Escherichia coli O157:H7).